We begin with the raw amino-acid sequence, 660 residues long: Sodium/nucleoside cotransporter 2 (660 aa).

S46 carries the post-translational modification Phosphoserine. Transmembrane regions (helical) follow at residues 82 to 102 (ILLGLLCLAYAAYFLAACILN), 106 to 125 (ALALFVITCLVIFILACHFL), 150 to 168 (KRVFVGLSVVGLILWLALD), 174 to 194 (EQLISFAGICMFILILFACSK), 202 to 222 (RTVFWGLGLQFIFGILVIRTE), 235 to 255 (IQIFLAYTVEGSSFVFGDTLV), 262 to 282 (QSLPIIIFFGCVMSILYYLGL), 297 to 316 (TMGTTAAETLAVAGNIFVGM), 338 to 357 (VMTGGFATIAGTVLGAFISF), 364 to 383 (LISASVMAAPCALALSKLVY), 425 to 445 (VAANLIAFLAVLAFINATLSW), 456 to 476 (SFQVICSYVLRPMVFMMGVQW), 531 to 551 (TTFSLCGFANLSSIGITLGGL), and 569 to 589 (ALFTGACVSFISACMAGILYV).

Belongs to the concentrative nucleoside transporter (CNT) (TC 2.A.41) family.

The protein resides in the membrane. The protein localises to the apicolateral cell membrane. The enzyme catalyses adenosine(out) + Na(+)(out) = adenosine(in) + Na(+)(in). It carries out the reaction inosine(out) + Na(+)(out) = inosine(in) + Na(+)(in). The catalysed reaction is guanosine(out) + Na(+)(out) = guanosine(in) + Na(+)(in). It catalyses the reaction uridine(out) + Na(+)(out) = uridine(in) + Na(+)(in). In terms of biological role, sodium-dependent and purine-selective transporter. Exhibits the transport characteristics of the nucleoside transport system cif or N1 subtype (N1/cif) (selective for purine nucleosides and uridine). Plays a critical role in specific uptake and salvage of purine nucleosides in kidney and other tissues. May contribute to regulate the transport of organic compounds in testes across the blood-testis-barrier. The chain is Sodium/nucleoside cotransporter 2 (Slc28a2) from Mus musculus (Mouse).